The chain runs to 1064 residues: Probable ATP-dependent DNA helicase CHR23 (1064 aa).

The region spanning 398–563 (VSLYNNDYNG…WSLLNFLLPH (166 aa)) is the Helicase ATP-binding domain. ATP is bound at residue 411–418 (DEMGLGKT). Residues 513-516 (DEGH) carry the DEAH box motif. The region spanning 699-866 (LLDRLLPKLK…DRREMLEEIM (168 aa)) is the Helicase C-terminal domain. 2 disordered regions span residues 924 to 955 (AYTS…AVYS) and 967 to 1064 (MESE…SKRN). Acidic residues predominate over residues 1002-1014 (ESDEEKEEEEEER). Residues 1048 to 1064 (SSPNSRGKGSSKGSKRN) show a composition bias toward low complexity.

It belongs to the helicase family. As to expression, expressed in embryos, root apical meristem (RAM) and shoot apical meristem (SAM).

Its subcellular location is the nucleus. It carries out the reaction ATP + H2O = ADP + phosphate + H(+). Functionally, probable chromatin-remodeling factor that is functionally redundant with CHR12 in root and shoot stem cell initiation and root apical meristem (RAM) and shoot apical meristem (SAM) maintenance. Can associate with the promoter region of WOX5. May promote seed maturation and repress initiation of germination. May repress plant growth. The sequence is that of Probable ATP-dependent DNA helicase CHR23 from Arabidopsis thaliana (Mouse-ear cress).